The chain runs to 3072 residues: Platelet binding protein GspB (3072 aa).

A signal peptide spans 1–85 (MFFKRQKGQY…AVLGGAVVTS (85 aa)). Disordered regions lie at residues 117-147 (EAAT…SASS), 182-254 (SESL…APNV), 876-909 (SAST…SVSA), 936-969 (SAST…SVSA), 1024-2085 (SASV…SVSA), 2106-2139 (SAST…SVSA), 2173-2223 (VSAS…SVSA), 2250-2595 (SAST…SVSA), 2625-2965 (TSAS…NASV), and 3014-3045 (SQSL…GESE). The span at 118–127 (AATTLSSTEA) shows a compositional bias: polar residues. The segment at 123 to 236 (SSTEANPVES…SSQQSTEASS (114 aa)) is ser-rich region 1 (SSR1). 2 stretches are compositionally biased toward low complexity: residues 131–147 (ESLS…SASS) and 182–238 (SESL…SSQT). Positions 237-603 (QTGRRRTRRA…GSKFIDTRAG (367 aa)) are basic region (BR). The interval 604–3028 (SISKSQSTSN…ESQSSSASQS (2425 aa)) is ser-rich region 2 (SSR2). Residues 3014 to 3028 (SQSLSESQSSSASQS) are compositionally biased toward low complexity. The LPXTG sorting signal signature appears at 3038-3042 (LPRTG). At Thr3041 the chain carries Pentaglycyl murein peptidoglycan amidated threonine. Positions 3042-3072 (GESENKASILALGLGALGLAFKKRKKNESED) are cleaved as a propeptide — removed by sortase.

It belongs to the serine-rich repeat protein (SRRP) family. As to quaternary structure, both SSR domains in the unglycosylated protein bind to Asp2 and Asp3; glycosylated protein binds less well. Interacts with the human cell surface glycoprotein GP1BA. In terms of processing, proteolytically cleaved by a metalloprotease. Post-translationally, both SSR1 and SSR2 domains are glycosylated. A truncated derivative (residues 1-2062) contains 105 nmol per nmol of protein, suggesting at least 10% of the apparent molecular weight is due to carbohydrates. Glucose and N-acetylglucosamine are present in a ratio of 30:73 residues per truncated polypeptide, as well as minor amounts of galactose and N-acetylgalactosamine. Glycosylation occurs intracellularly in the Ser-rich regions SSR1 and SSR2. Glycosylation of SSR2 domain may be required to prevent aggregation of GspB. It is probable that most of the Ser residues in SSR1 and SSR2 are O-GlcNAcylated. Sequential glycosylation by sugar transferases are able to generate complex sugar polymorphisms.

The protein localises to the secreted. It localises to the cell wall. In terms of biological role, plays a role in virulence and host-pathogen interactions. Mediates binding to human platelets via interaction with the human cell surface glycoprotein GP1BA. Plays a positive role in biofilm formation, possibly by self-association via the basic region (BR). The sequence is that of Platelet binding protein GspB (gspB) from Streptococcus gordonii.